The following is a 118-amino-acid chain: Large ribosomal subunit protein bL20 (118 aa).

Belongs to the bacterial ribosomal protein bL20 family.

In terms of biological role, binds directly to 23S ribosomal RNA and is necessary for the in vitro assembly process of the 50S ribosomal subunit. It is not involved in the protein synthesizing functions of that subunit. In Psychromonas ingrahamii (strain DSM 17664 / CCUG 51855 / 37), this protein is Large ribosomal subunit protein bL20.